Here is a 428-residue protein sequence, read N- to C-terminus: Serine--tRNA ligase (428 aa).

231–233 is an L-serine binding site; sequence TAE. Position 262–264 (262–264) interacts with ATP; it reads RSE. Glu-285 serves as a coordination point for L-serine. Residue 349 to 352 coordinates ATP; the sequence is EISS. Residue Ser-385 participates in L-serine binding.

Belongs to the class-II aminoacyl-tRNA synthetase family. Type-1 seryl-tRNA synthetase subfamily. In terms of assembly, homodimer. The tRNA molecule binds across the dimer.

Its subcellular location is the cytoplasm. It carries out the reaction tRNA(Ser) + L-serine + ATP = L-seryl-tRNA(Ser) + AMP + diphosphate + H(+). The enzyme catalyses tRNA(Sec) + L-serine + ATP = L-seryl-tRNA(Sec) + AMP + diphosphate + H(+). The protein operates within aminoacyl-tRNA biosynthesis; selenocysteinyl-tRNA(Sec) biosynthesis; L-seryl-tRNA(Sec) from L-serine and tRNA(Sec): step 1/1. In terms of biological role, catalyzes the attachment of serine to tRNA(Ser). Is also able to aminoacylate tRNA(Sec) with serine, to form the misacylated tRNA L-seryl-tRNA(Sec), which will be further converted into selenocysteinyl-tRNA(Sec). This Staphylococcus aureus (strain bovine RF122 / ET3-1) protein is Serine--tRNA ligase.